The primary structure comprises 311 residues: MDRNELLKEPVKDISIKSETTISELIGMFGRSGGFTAKKIYEGYEIIKEMFNDDETTFLSFPADIISTGTRGIINELVKRKLVDVIITTNGTLDHDIARTYRDYYAGTFNFSDAMLRDLGINRLGNVFVPDESYGSIIEEKVMPILDELYKEKKEWSGYELIWELGKRINNESSIIYNAYKNRIPVFIPGMTDGSVGSQLWSFYEMNRDFRINLLEDEHKLSDIIFDAKKTGAIMIGGGISKHHTIWWNQFRDGLNQAVYITTAQEYDGSLSGAKLEEAISWKKVREDARFVNIYGDATVILPLIVAPFLK.

The Nucleophile role is filled by lysine 284.

It belongs to the deoxyhypusine synthase family. Requires NAD(+) as cofactor.

It carries out the reaction [eIF5A protein]-L-lysine + spermidine = [eIF5A protein]-deoxyhypusine + propane-1,3-diamine. It functions in the pathway protein modification; eIF5A hypusination. Functionally, catalyzes the NAD-dependent oxidative cleavage of spermidine and the subsequent transfer of the butylamine moiety of spermidine to the epsilon-amino group of a specific lysine residue of the eIF-5A precursor protein to form the intermediate deoxyhypusine residue. This is Probable deoxyhypusine synthase from Picrophilus torridus (strain ATCC 700027 / DSM 9790 / JCM 10055 / NBRC 100828 / KAW 2/3).